The following is a 301-amino-acid chain: Ornithine carbamoyltransferase (301 aa).

Residues 47–50, glutamine 74, arginine 98, and 125–128 each bind carbamoyl phosphate; these read STRT and HPMQ. L-ornithine contacts are provided by residues asparagine 156, aspartate 220, and 224-225; that span reads SM. Carbamoyl phosphate is bound by residues 260-261 and arginine 288; that span reads CL.

Belongs to the aspartate/ornithine carbamoyltransferase superfamily. OTCase family.

It is found in the cytoplasm. The catalysed reaction is carbamoyl phosphate + L-ornithine = L-citrulline + phosphate + H(+). Its pathway is amino-acid biosynthesis; L-arginine biosynthesis; L-arginine from L-ornithine and carbamoyl phosphate: step 1/3. Its function is as follows. Reversibly catalyzes the transfer of the carbamoyl group from carbamoyl phosphate (CP) to the N(epsilon) atom of ornithine (ORN) to produce L-citrulline. The polypeptide is Ornithine carbamoyltransferase (Picrophilus torridus (strain ATCC 700027 / DSM 9790 / JCM 10055 / NBRC 100828 / KAW 2/3)).